We begin with the raw amino-acid sequence, 524 residues long: Magnesium/proton exchanger 2 (524 aa).

11 helical membrane passes run 28-48 (GVRA…LSAI), 88-108 (IADV…LATI), 125-145 (GTLV…CVVM), 157-177 (LGVW…LYII), 185-205 (VITL…LLHA), 325-345 (VIGI…AFIP), 349-369 (IAHG…IAYG), 377-397 (ISCV…AAGT), 430-450 (IYVG…LFVY), 462-482 (LSFS…VLVL), and 496-516 (MWAW…VVLS).

Belongs to the Ca(2+):cation antiporter (CaCA) (TC 2.A.19) family. MHX subfamily.

It is found in the vacuole membrane. Vacuolar transporter that exchanges protons with Mg(2+), Zn(2+) and Fe(2+) ions. May control the partitioning of Mg(2+) and Zn(2+) between plant organs. This chain is Magnesium/proton exchanger 2 (MHX2), found in Oryza sativa subsp. japonica (Rice).